Reading from the N-terminus, the 234-residue chain is MLFSPPLQRATLIQRYKRFLADVITPDGTALTLHCPNTGAMTGCATPGDTVWYSTSENTKRKYPHTWELTETQFGAFICVNTLRANQLTKEAIQENRLPALAGYNILKSEVKYGAERSRIDFMLQADFRPDCYIEVKSVTLAEKENGYFPDAITERGQKHLRELMGVAAAGHRAVVVFAVLHSAITRFSPARHIDIKYAQLLSEAQNKGVEVLAYKAELSAQKMELNEPVPITL.

The H-T-H motif DNA-binding region spans 201–220 (LLSEAQNKGVEVLAYKAELS).

Belongs to the SfsA family.

Its function is as follows. Binds to DNA non-specifically. Could be a regulatory factor involved in maltose metabolism. In Salmonella gallinarum (strain 287/91 / NCTC 13346), this protein is Sugar fermentation stimulation protein A.